Reading from the N-terminus, the 155-residue chain is Ribosomal RNA large subunit methyltransferase H (155 aa).

Residues G104 and 123-128 (LSAMTF) contribute to the S-adenosyl-L-methionine site.

Belongs to the RNA methyltransferase RlmH family. Homodimer.

The protein localises to the cytoplasm. The catalysed reaction is pseudouridine(1915) in 23S rRNA + S-adenosyl-L-methionine = N(3)-methylpseudouridine(1915) in 23S rRNA + S-adenosyl-L-homocysteine + H(+). Specifically methylates the pseudouridine at position 1915 (m3Psi1915) in 23S rRNA. The sequence is that of Ribosomal RNA large subunit methyltransferase H from Oleidesulfovibrio alaskensis (strain ATCC BAA-1058 / DSM 17464 / G20) (Desulfovibrio alaskensis).